Here is a 305-residue protein sequence, read N- to C-terminus: Serine/threonine-protein phosphatase PP-X homolog 3 (305 aa).

The Mn(2+) site is built by Asp-53, His-55, Asp-81, and Asn-113. Catalysis depends on His-114, which acts as the Proton donor. Mn(2+) is bound by residues His-163 and His-237.

The protein belongs to the PPP phosphatase family. PP-4 (PP-X) subfamily. Mn(2+) serves as cofactor.

It catalyses the reaction O-phospho-L-seryl-[protein] + H2O = L-seryl-[protein] + phosphate. It carries out the reaction O-phospho-L-threonyl-[protein] + H2O = L-threonyl-[protein] + phosphate. This Paramecium tetraurelia protein is Serine/threonine-protein phosphatase PP-X homolog 3 (Ppx3).